Consider the following 494-residue polypeptide: NADH-quinone oxidoreductase subunit N 2 (494 aa).

A run of 14 helical transmembrane segments spans residues 14-34 (LPQIALTVAAFFVLACDGMLL), 45-65 (IAMLLSVAGSLVALALLPLTA), 82-102 (VVQVVLLLFTLAVTLLSGSVL), 116-136 (IGEFFALLLFATVAALFLVST), 139-159 (LLLIFLAVEFLSLVLYILTAF), 174-194 (FLFGGMSAGFLLFGISLLYGV), 214-234 (LLVAIVLVILGFGFKIAAAPF), 262-282 (FFVFAQVLFIGVASASGNAAW), 289-309 (WMPILAAVAVLSMLLGNLAAL), 317-337 (LLAYSAIGHAGYLLLGLIAHT), 344-364 (LLYYVFTYALAVLGAFGVLAI), 388-408 (ACLLVFLLSLAGIPPLVGFFA), 422-442 (AFGLLWLVILAILMSVVALFY), and 470-490 (ITLLVMAALTLLLGCAPNLLM).

This sequence belongs to the complex I subunit 2 family. As to quaternary structure, NDH-1 is composed of 14 different subunits. Subunits NuoA, H, J, K, L, M, N constitute the membrane sector of the complex.

Its subcellular location is the cell inner membrane. It carries out the reaction a quinone + NADH + 5 H(+)(in) = a quinol + NAD(+) + 4 H(+)(out). In terms of biological role, NDH-1 shuttles electrons from NADH, via FMN and iron-sulfur (Fe-S) centers, to quinones in the respiratory chain. The immediate electron acceptor for the enzyme in this species is believed to be ubiquinone. Couples the redox reaction to proton translocation (for every two electrons transferred, four hydrogen ions are translocated across the cytoplasmic membrane), and thus conserves the redox energy in a proton gradient. The polypeptide is NADH-quinone oxidoreductase subunit N 2 (Acidobacterium capsulatum (strain ATCC 51196 / DSM 11244 / BCRC 80197 / JCM 7670 / NBRC 15755 / NCIMB 13165 / 161)).